The sequence spans 156 residues: 6,7-dimethyl-8-ribityllumazine synthase (156 aa).

Residues Phe23, 57–59, and 81–83 contribute to the 5-amino-6-(D-ribitylamino)uracil site; these read SWE and AVV. (2S)-2-hydroxy-3-oxobutyl phosphate is bound at residue 86–87; it reads ET. His89 serves as the catalytic Proton donor. Phe114 contributes to the 5-amino-6-(D-ribitylamino)uracil binding site. Residue Arg128 coordinates (2S)-2-hydroxy-3-oxobutyl phosphate.

The protein belongs to the DMRL synthase family.

It catalyses the reaction (2S)-2-hydroxy-3-oxobutyl phosphate + 5-amino-6-(D-ribitylamino)uracil = 6,7-dimethyl-8-(1-D-ribityl)lumazine + phosphate + 2 H2O + H(+). The protein operates within cofactor biosynthesis; riboflavin biosynthesis; riboflavin from 2-hydroxy-3-oxobutyl phosphate and 5-amino-6-(D-ribitylamino)uracil: step 1/2. Functionally, catalyzes the formation of 6,7-dimethyl-8-ribityllumazine by condensation of 5-amino-6-(D-ribitylamino)uracil with 3,4-dihydroxy-2-butanone 4-phosphate. This is the penultimate step in the biosynthesis of riboflavin. The chain is 6,7-dimethyl-8-ribityllumazine synthase from Salinibacter ruber (strain DSM 13855 / M31).